The sequence spans 74 residues: Conotoxin AbVII (74 aa).

The N-terminal stretch at 1–17 (VLIIAVLFLTACQLTTA) is a signal peptide. The propeptide occupies 18 to 40 (ETSSRGKQKHRALRSTDKNSRMT). Residues 19–41 (TSSRGKQKHRALRSTDKNSRMTK) form a disordered region. Intrachain disulfides connect Cys-43/Cys-57, Cys-50/Cys-61, and Cys-56/Cys-68.

This sequence belongs to the conotoxin O1 superfamily. In terms of tissue distribution, expressed by the venom duct.

It is found in the secreted. The chain is Conotoxin AbVII from Conus abbreviatus (Abbreviated cone).